The chain runs to 172 residues: UPF0114 protein PMI3225 (172 aa).

4 consecutive transmembrane segments (helical) span residues 15 to 35 (LFAPVYIGLSLGLLALTIKFF), 57 to 77 (LLSLIDLALVGGLLIMVIFSG), 108 to 128 (KVAASIVAISSIHLLGVFMDL), and 136 to 156 (LLWYVVLHLTFVFSAFVMGYL).

It belongs to the UPF0114 family.

The protein localises to the cell membrane. The sequence is that of UPF0114 protein PMI3225 from Proteus mirabilis (strain HI4320).